Reading from the N-terminus, the 158-residue chain is UPF0311 protein CA_C3321 (158 aa).

Belongs to the UPF0311 family.

This Clostridium acetobutylicum (strain ATCC 824 / DSM 792 / JCM 1419 / IAM 19013 / LMG 5710 / NBRC 13948 / NRRL B-527 / VKM B-1787 / 2291 / W) protein is UPF0311 protein CA_C3321.